A 558-amino-acid chain; its full sequence is MAELRSNMIKQGIDRAPHRSLLRAAGVKDEDFGKPFIAVCNSYIDIVPGHVHLQEFGKIVKEAIREAGGVPFEFNTIGVDDGIAMGHIGMRYSLPSREIIADSVETVVSAHWFDGMVCIPNCDKITPGMMMAAMRVNIPTVFVSGGPMEAGRTSDGRKISLSSVFEGVGAYQSGKINEEELNELEQFGCPTCGSCSGMFTANSMNCLAEALGIALPGNGTILATSPERREFAKKSAKQLMELIKKDIKPRDIVTEKAIDNAFALDMALGGSTNTVLHTLAIANEAGVEYSLERINEVAERVPHLSKLAPASDVYIEDLHEAGGVTAALNELSKKEGALHLDTMTVTAKTLGENIAGHEVKDYNVIYPIDKPFTEKGGLAVLFGNLAPDGAIIKTGGVQDGITRHEGPAIVFESQEEALEGIINRKVEAGHVVIIRYEGPKGGPGMPEMLAPTSQIVGMGLGPKVALITDGRFSGASRGLSIGHVSPEAAEGGPLAFVENGDHVVVDIEQRILSVDVPEEEWEKRKANWKGFEPKVKTGYLARYSKLVTSANTGGIMKI.

Aspartate 81 is a binding site for Mg(2+). Residue cysteine 122 coordinates [2Fe-2S] cluster. Mg(2+) is bound by residues aspartate 123 and lysine 124. Lysine 124 bears the N6-carboxylysine mark. Cysteine 195 contributes to the [2Fe-2S] cluster binding site. Mg(2+) is bound at residue glutamate 447. Serine 473 functions as the Proton acceptor in the catalytic mechanism.

The protein belongs to the IlvD/Edd family. As to quaternary structure, homodimer. It depends on [2Fe-2S] cluster as a cofactor. Mg(2+) serves as cofactor.

It catalyses the reaction (2R)-2,3-dihydroxy-3-methylbutanoate = 3-methyl-2-oxobutanoate + H2O. The catalysed reaction is (2R,3R)-2,3-dihydroxy-3-methylpentanoate = (S)-3-methyl-2-oxopentanoate + H2O. It functions in the pathway amino-acid biosynthesis; L-isoleucine biosynthesis; L-isoleucine from 2-oxobutanoate: step 3/4. Its pathway is amino-acid biosynthesis; L-valine biosynthesis; L-valine from pyruvate: step 3/4. Its function is as follows. Functions in the biosynthesis of branched-chain amino acids. Catalyzes the dehydration of (2R,3R)-2,3-dihydroxy-3-methylpentanoate (2,3-dihydroxy-3-methylvalerate) into 2-oxo-3-methylpentanoate (2-oxo-3-methylvalerate) and of (2R)-2,3-dihydroxy-3-methylbutanoate (2,3-dihydroxyisovalerate) into 2-oxo-3-methylbutanoate (2-oxoisovalerate), the penultimate precursor to L-isoleucine and L-valine, respectively. The protein is Dihydroxy-acid dehydratase of Bacillus pumilus (strain SAFR-032).